Consider the following 152-residue polypeptide: Large ribosomal subunit protein bL9 (152 aa).

It belongs to the bacterial ribosomal protein bL9 family.

Binds to the 23S rRNA. This chain is Large ribosomal subunit protein bL9, found in Coxiella burnetii (strain RSA 331 / Henzerling II).